Here is a 201-residue protein sequence, read N- to C-terminus: Proteinase inhibitor type-2 CEVI57 (201 aa).

A signal peptide spans 1-23 (MAVYKVSFLAHLLVLGMYLLVST). 3 repeat units span residues 27–83 (ANAC…DPKN), 84–143 (PNIC…IEPK), and 144–199 (GCTK…QSIS). 8 cysteine pairs are disulfide-bonded: Cys30-Cys118, Cys34-Cys114, Cys42-Cys124, Cys54-Cys91, Cys57-Cys75, Cys58-Cys87, Cys64-Cys100, and Cys117-Cys135.

It belongs to the protease inhibitor I20 (potato type II proteinase inhibitor) family.

This chain is Proteinase inhibitor type-2 CEVI57 (CEVI57), found in Solanum lycopersicum (Tomato).